A 223-amino-acid chain; its full sequence is Phosphoribosylformylglycinamidine synthase subunit PurQ (223 aa).

The Glutamine amidotransferase type-1 domain occupies 3-223 (FAVLVFPGSN…MVNSWREQNV (221 aa)). The active-site Nucleophile is the Cys85. Active-site residues include His193 and Glu195.

As to quaternary structure, part of the FGAM synthase complex composed of 1 PurL, 1 PurQ and 2 PurS subunits.

The protein resides in the cytoplasm. The catalysed reaction is N(2)-formyl-N(1)-(5-phospho-beta-D-ribosyl)glycinamide + L-glutamine + ATP + H2O = 2-formamido-N(1)-(5-O-phospho-beta-D-ribosyl)acetamidine + L-glutamate + ADP + phosphate + H(+). It carries out the reaction L-glutamine + H2O = L-glutamate + NH4(+). It participates in purine metabolism; IMP biosynthesis via de novo pathway; 5-amino-1-(5-phospho-D-ribosyl)imidazole from N(2)-formyl-N(1)-(5-phospho-D-ribosyl)glycinamide: step 1/2. Its function is as follows. Part of the phosphoribosylformylglycinamidine synthase complex involved in the purines biosynthetic pathway. Catalyzes the ATP-dependent conversion of formylglycinamide ribonucleotide (FGAR) and glutamine to yield formylglycinamidine ribonucleotide (FGAM) and glutamate. The FGAM synthase complex is composed of three subunits. PurQ produces an ammonia molecule by converting glutamine to glutamate. PurL transfers the ammonia molecule to FGAR to form FGAM in an ATP-dependent manner. PurS interacts with PurQ and PurL and is thought to assist in the transfer of the ammonia molecule from PurQ to PurL. This chain is Phosphoribosylformylglycinamidine synthase subunit PurQ, found in Staphylococcus haemolyticus (strain JCSC1435).